The chain runs to 102 residues: UPF0045 protein Mb1933 (102 aa).

This sequence belongs to the UPF0045 family.

The chain is UPF0045 protein Mb1933 from Mycobacterium bovis (strain ATCC BAA-935 / AF2122/97).